The chain runs to 259 residues: Trans-4-hydroxycyclohexanecarboxylate dehydrogenase (259 aa).

NAD(+) contacts are provided by arginine 20, methionine 22, aspartate 41, aspartate 73, valine 74, asparagine 100, tyrosine 164, lysine 168, valine 197, threonine 199, and threonine 202. Tyrosine 164 (proton acceptor) is an active-site residue.

Belongs to the short-chain dehydrogenases/reductases (SDR) family. As to quaternary structure, homodimer. Homotetramer.

It catalyses the reaction trans-4-hydroxycyclohexane-1-carboxylate + NAD(+) = 4-oxocyclohexane-1-carboxylate + NADH + H(+). With respect to regulation, strongly inhibited by N-bromosuccinimide. Not inhibited by sulfhydryl reagents, such as iodoacetic acid, iodoacetamide, N-ethylmaleimide and p-hydroxymercuribenzoic acid. In terms of biological role, dehydrogenase involved in a cyclohexanecarboxylate (CHCA) degradation pathway. Catalyzes the NAD(+)-dependent dehydrogenation of trans-4-hydroxycyclohexanecarboxylate (trans-4-hydroxyCHCA) to form 4-oxocyclohexanecarboxylate (4-oxoCHCA). Is highly specific for the trans-4-hydroxy derivative and shows only weak activity with cis-4-hydroxyCHCA. Can also catalyze the reverse reaction (4-oxoCHCA reduction) with a higher catalytic efficiency. In the reverse reaction, is highly specific for 4-oxoCHCA and cannot use either the 2-oxo or the 3-oxo homolog as substrate. Cannot use NADP(+). This chain is Trans-4-hydroxycyclohexanecarboxylate dehydrogenase, found in Sinomonas cyclohexanicum (Corynebacterium cyclohexanicum).